The sequence spans 311 residues: MAEKTANDLKLSEIELVDFRIYGMQEGVPYEGIYGINVAKVQEIIPMPTLFEYPTNLDYIIGVFDLRSIIIPLIDLAKWIGIIPDKSKENEKIVIITEFNNVKMGFLVHSARRIRRISWKDVEPASFSASNSINKENITGTTRIENDKTLLILDLESILDDLKLNEDAKNAKDTHKERFEGEVLFLDDSKTARKTLKNHLSKLGFSITEAVDGEDGLNKLEMLFKKYGDDLRKHLKFIISDVEMPKMDGYHFLFKLQKDPRFAYIPVIFNSSICDNYSAERAKEMGAVAYLVKFDAEKFTEEISKILDKNA.

Positions 13–164 (EIELVDFRIY…LESILDDLKL (152 aa)) constitute a CheW-like domain. The region spanning 182-308 (EVLFLDDSKT…FTEEISKILD (127 aa)) is the Response regulatory domain. Aspartate 241 is modified (4-aspartylphosphate).

In terms of biological role, plays a role in chemotaxis signal transduction system in order to colonize the host stomach. May act as a phosphate sink to control the flow of phosphate to CheAY. The sequence is that of Chemotaxis protein CheV3 from Helicobacter pylori (strain ATCC 700392 / 26695) (Campylobacter pylori).